The chain runs to 397 residues: Cysteine desulfurase (397 aa).

Residues N148, Q176, and 196 to 198 each bind pyridoxal 5'-phosphate; that span reads SAH. An N6-(pyridoxal phosphate)lysine modification is found at K199. T234 contributes to the pyridoxal 5'-phosphate binding site. C321 functions as the Cysteine persulfide intermediate in the catalytic mechanism. C321 provides a ligand contact to [2Fe-2S] cluster.

The protein belongs to the class-V pyridoxal-phosphate-dependent aminotransferase family. NifS/IscS subfamily. As to quaternary structure, homodimer. The cofactor is pyridoxal 5'-phosphate.

It carries out the reaction (sulfur carrier)-H + L-cysteine = (sulfur carrier)-SH + L-alanine. Catalyzes the removal of elemental sulfur atoms from cysteine to produce alanine. Seems to participate in the biosynthesis of the nitrogenase metalloclusters by providing the inorganic sulfur required for the Fe-S core formation. This is Cysteine desulfurase from Klebsiella pneumoniae.